The primary structure comprises 169 residues: Phosphopantetheine adenylyltransferase (169 aa).

S10 contributes to the substrate binding site. ATP contacts are provided by residues 10-11 (SF) and H18. Residues K42, L74, and R88 each contribute to the substrate site. ATP is bound by residues 89–91 (GLR), E99, and 124–130 (YAFLSSS).

The protein belongs to the bacterial CoaD family. In terms of assembly, homohexamer. The cofactor is Mg(2+).

It localises to the cytoplasm. The enzyme catalyses (R)-4'-phosphopantetheine + ATP + H(+) = 3'-dephospho-CoA + diphosphate. The protein operates within cofactor biosynthesis; coenzyme A biosynthesis; CoA from (R)-pantothenate: step 4/5. Reversibly transfers an adenylyl group from ATP to 4'-phosphopantetheine, yielding dephospho-CoA (dPCoA) and pyrophosphate. This chain is Phosphopantetheine adenylyltransferase, found in Geobacillus sp. (strain WCH70).